A 261-amino-acid polypeptide reads, in one-letter code: HLA class II histocompatibility antigen, DQ beta 1 chain (261 aa).

A signal peptide spans 1–32 (MSWKKALRIPGGLRAATVTLMLAMLSTPVAEG). Positions 33 to 126 (RDSPEDFVYQ…LELRTTLQRR (94 aa)) are beta-1. The Extracellular segment spans residues 33–230 (RDSPEDFVYQ…RAQSESAQSK (198 aa)). 2 disulfides stabilise this stretch: Cys-47/Cys-111 and Cys-149/Cys-205. Residue Asn-51 is glycosylated (N-linked (GlcNAc...) asparagine). A beta-2 region spans residues 127–220 (VEPTVTISPS…SLQNPITVEW (94 aa)). The Ig-like C1-type domain maps to 129-217 (PTVTISPSRT…EHPSLQNPIT (89 aa)). The segment at 221–230 (RAQSESAQSK) is connecting peptide. The helical transmembrane segment at 231–251 (MLSGIGGFVLGLIFLGLGLII) threads the bilayer. Over 252-261 (HHRSQKGLLH) the chain is Cytoplasmic.

It belongs to the MHC class II family. Heterodimer of an alpha and a beta subunit; also referred as MHC class II molecule. In the endoplasmic reticulum (ER) it forms a heterononamer; 3 MHC class II molecules bind to a CD74 homotrimer (also known as invariant chain or HLA class II histocompatibility antigen gamma chain). In the endosomal/lysosomal system; CD74 undergoes sequential degradation by various proteases; leaving a small fragment termed CLIP on each MHC class II molecule. MHC class II molecule interacts with HLA_DM, and HLA_DO in B-cells, in order to release CLIP and facilitate the binding of antigenic peptides.

It localises to the cell membrane. The protein resides in the endoplasmic reticulum membrane. It is found in the golgi apparatus. The protein localises to the trans-Golgi network membrane. Its subcellular location is the endosome membrane. It localises to the lysosome membrane. Binds peptides derived from antigens that access the endocytic route of antigen presenting cells (APC) and presents them on the cell surface for recognition by the CD4 T-cells. The peptide binding cleft accommodates peptides of 10-30 residues. The peptides presented by MHC class II molecules are generated mostly by degradation of proteins that access the endocytic route, where they are processed by lysosomal proteases and other hydrolases. Exogenous antigens that have been endocytosed by the APC are thus readily available for presentation via MHC II molecules, and for this reason this antigen presentation pathway is usually referred to as exogenous. As membrane proteins on their way to degradation in lysosomes as part of their normal turn-over are also contained in the endosomal/lysosomal compartments, exogenous antigens must compete with those derived from endogenous components. Autophagy is also a source of endogenous peptides, autophagosomes constitutively fuse with MHC class II loading compartments. In addition to APCs, other cells of the gastrointestinal tract, such as epithelial cells, express MHC class II molecules and CD74 and act as APCs, which is an unusual trait of the GI tract. To produce a MHC class II molecule that presents an antigen, three MHC class II molecules (heterodimers of an alpha and a beta chain) associate with a CD74 trimer in the ER to form a heterononamer. Soon after the entry of this complex into the endosomal/lysosomal system where antigen processing occurs, CD74 undergoes a sequential degradation by various proteases, including CTSS and CTSL, leaving a small fragment termed CLIP (class-II-associated invariant chain peptide). The removal of CLIP is facilitated by HLA-DM via direct binding to the alpha-beta-CLIP complex so that CLIP is released. HLA-DM stabilizes MHC class II molecules until primary high affinity antigenic peptides are bound. The MHC II molecule bound to a peptide is then transported to the cell membrane surface. In B-cells, the interaction between HLA-DM and MHC class II molecules is regulated by HLA-DO. Primary dendritic cells (DCs) also to express HLA-DO. Lysosomal microenvironment has been implicated in the regulation of antigen loading into MHC II molecules, increased acidification produces increased proteolysis and efficient peptide loading. The chain is HLA class II histocompatibility antigen, DQ beta 1 chain (HLA-DQB1) from Homo sapiens (Human).